Reading from the N-terminus, the 103-residue chain is Small ribosomal subunit protein uS10 (103 aa).

This sequence belongs to the universal ribosomal protein uS10 family. Part of the 30S ribosomal subunit.

Its function is as follows. Involved in the binding of tRNA to the ribosomes. This is Small ribosomal subunit protein uS10 from Fusobacterium nucleatum subsp. nucleatum (strain ATCC 25586 / DSM 15643 / BCRC 10681 / CIP 101130 / JCM 8532 / KCTC 2640 / LMG 13131 / VPI 4355).